Here is a 565-residue protein sequence, read N- to C-terminus: Ubiquitin carboxyl-terminal hydrolase 39 (565 aa).

Basic and acidic residues-rich tracts occupy residues 1 to 21 (MSGRSKRESRGSTRGKRESES) and 28 to 39 (VKRERDREREPE). 2 disordered regions span residues 1–61 (MSGR…SARE) and 75–96 (EREVDEDSEPEREVRAKNGRVD). Phosphoserine is present on S46. Residue K51 forms a Glycyl lysine isopeptide (Lys-Gly) (interchain with G-Cter in SUMO2) linkage. The residue at position 82 (S82) is a Phosphoserine. Basic and acidic residues predominate over residues 85 to 96 (EREVRAKNGRVD). Residues 103-200 (RHCPYLDTIN…YVLKPTFTKQ (98 aa)) form a UBP-type; degenerate zinc finger. Zn(2+)-binding residues include C136, C139, H155, and H161. The region spanning 225-555 (VGLNNIKAND…EAYIQIWKRR (331 aa)) is the USP domain.

The protein belongs to the peptidase C19 family. As to quaternary structure, the U4/U6-U5 tri-snRNP complex is a building block of the precatalytic spliceosome (spliceosome B complex). Component of the U4/U6-U5 tri-snRNP complex composed of the U4, U6 and U5 snRNAs and at least PRPF3, PRPF4, PRPF6, PRPF8, PRPF31, SNRNP200, TXNL4A, SNRNP40, SNRPB, SNRPD1, SNRPD2, SNRPD3, SNRPE, SNRPF, SNRPG, DDX23, CD2BP2, PPIH, SNU13, EFTUD2, SART1 and USP39, plus LSM2, LSM3, LSM4, LSM5, LSM6, LSM7 and LSM8.

Its subcellular location is the nucleus. The catalysed reaction is Thiol-dependent hydrolysis of ester, thioester, amide, peptide and isopeptide bonds formed by the C-terminal Gly of ubiquitin (a 76-residue protein attached to proteins as an intracellular targeting signal).. Functionally, deubiquitinating enzyme that plays a role in many cellular processes including cellular antiviral response, epithelial morphogenesis, DNA repair or B-cell development. Plays a role in pre-mRNA splicing as a component of the U4/U6-U5 tri-snRNP, one of the building blocks of the precatalytic spliceosome. Specifically regulates immunoglobulin gene rearrangement in a spliceosome-dependent manner, which involves modulating chromatin interactions at the Igh locus and therefore plays an essential role in B-cell development. Regulates AURKB mRNA levels, and thereby plays a role in cytokinesis and in the spindle checkpoint. Regulates apoptosis and G2/M cell cycle checkpoint in response to DNA damage by deubiquitinating and stabilizing CHK2. Also plays an important role in DNA repair by controlling the recruitment of XRCC4/LIG4 to DNA double-strand breaks for non-homologous end-joining repair. Participates in antiviral activity by affecting the type I IFN signaling by stabilizing STAT1 and decreasing its 'Lys-6'-linked ubiquitination. Contributes to non-canonical Wnt signaling during epidermal differentiation. Acts as a negative regulator NF-kappa-B activation through deubiquitination of 'Lys-48'-linked ubiquitination of NFKBIA. In Pongo abelii (Sumatran orangutan), this protein is Ubiquitin carboxyl-terminal hydrolase 39 (USP39).